A 177-amino-acid polypeptide reads, in one-letter code: Large ribosomal subunit protein eL20 (177 aa).

Belongs to the eukaryotic ribosomal protein eL20 family.

This Spodoptera frugiperda (Fall armyworm) protein is Large ribosomal subunit protein eL20 (RpL18A).